The primary structure comprises 414 residues: MTEKLQPLRGMKDLLPDDYKVHDYIINKARDVGVLYGYKQMSTPIVEYTKVFNRSMGESSDVISKEIYSFLDKSNDFVALRPEFTACIIRSLISNRLQHKLPLKFFSTGPVFRYDRPQAGRQRQFHQLNYEYIGAKGAITDADTLKLAVDILKALEIEQDTTLELNSLGCNESRSVYQQKLVEYLNDFKDQLSEESKIRLSKNPMRILDSKSETDQKIIANAPVLSEYYTDESKEYFEELIQYLDILGVKYSINPRLVRGLDYYCHTAFEFTTKKLGSQSTILAGGRYDGLAKIMGNNDDVPAIGFAAGIERIALMREYNISEVKPVFVLPIGKNNICYALEIVDKLRTENIAIIIESLGKIAKRMQRIFNENAQFIIFIGDEEQANNNLKIKDLKKAEEYIVDFAKALELLKK.

Belongs to the class-II aminoacyl-tRNA synthetase family. In terms of assembly, homodimer.

It localises to the cytoplasm. It catalyses the reaction tRNA(His) + L-histidine + ATP = L-histidyl-tRNA(His) + AMP + diphosphate + H(+). This Rickettsia conorii (strain ATCC VR-613 / Malish 7) protein is Histidine--tRNA ligase.